A 126-amino-acid chain; its full sequence is Basic phospholipase A2 1 (126 aa).

Positions serine 1–leucine 7 are excised as a propeptide. Cystine bridges form between cysteine 18/cysteine 78, cysteine 33/cysteine 125, cysteine 35/cysteine 51, cysteine 50/cysteine 106, cysteine 57/cysteine 99, cysteine 67/cysteine 92, and cysteine 85/cysteine 97. Tyrosine 34, glycine 36, and glycine 38 together coordinate Ca(2+). Histidine 54 is a catalytic residue. Aspartate 55 lines the Ca(2+) pocket. Aspartate 100 is a catalytic residue.

Belongs to the phospholipase A2 family. Group I subfamily. D49 sub-subfamily. Heterodimer formed between two homologous isoforms: isoform 1 and isoform 2. Ca(2+) is required as a cofactor. Expressed by the venom gland.

Its subcellular location is the secreted. The catalysed reaction is a 1,2-diacyl-sn-glycero-3-phosphocholine + H2O = a 1-acyl-sn-glycero-3-phosphocholine + a fatty acid + H(+). In terms of biological role, PLA2 catalyzes the calcium-dependent hydrolysis of the 2-acyl groups in 3-sn-phosphoglycerides. The sequence is that of Basic phospholipase A2 1 from Naja sagittifera (Andaman cobra).